A 280-amino-acid polypeptide reads, in one-letter code: Octanoyl-[GcvH]:protein N-octanoyltransferase (280 aa).

The region spanning 40–245 is the BPL/LPL catalytic domain; that stretch reads QERGAVLRAW…VLSTVSLLQN (206 aa). The active-site Acyl-thioester intermediate is Cys144.

Belongs to the octanoyltransferase LipL family.

It catalyses the reaction N(6)-octanoyl-L-lysyl-[glycine-cleavage complex H protein] + L-lysyl-[lipoyl-carrier protein] = N(6)-octanoyl-L-lysyl-[lipoyl-carrier protein] + L-lysyl-[glycine-cleavage complex H protein]. It functions in the pathway protein modification; protein lipoylation via endogenous pathway; protein N(6)-(lipoyl)lysine from octanoyl-[acyl-carrier-protein]. In terms of biological role, catalyzes the amidotransfer (transamidation) of the octanoyl moiety from octanoyl-GcvH to the lipoyl domain of the E2 subunit of lipoate-dependent enzymes. This is Octanoyl-[GcvH]:protein N-octanoyltransferase from Exiguobacterium sp. (strain ATCC BAA-1283 / AT1b).